The following is a 124-amino-acid chain: uncharacterized protein (124 aa).

Residues valine 83–alanine 100 traverse the membrane as a helical segment.

It localises to the membrane. This is an uncharacterized protein from Saccharomyces cerevisiae (strain ATCC 204508 / S288c) (Baker's yeast).